The sequence spans 1456 residues: ABC-type transporter eriD (1456 aa).

The interval 1 to 65 is disordered; that stretch reads MAENEKVTYG…DPRMDPLSGK (65 aa). Residues 30-40 are compositionally biased toward polar residues; it reads SMTNASRSSVY. An ABC transporter 1 domain is found at 118 to 372; it reads LDIPGLARDI…FIDMGFECPP (255 aa). A run of 6 helical transmembrane segments spans residues 481–501, 515–535, 561–581, 590–610, 623–643, and 734–754; these read NFLTSVIGNFILALIISSIFY, ALLFFAILMNAFASSLEILQI, VLCDLPGKVIASFAFNLVLYF, GAFFTFYLFSLMCILVMSMIF, AMAPSSVILLALVIFTGFTIP, and ILFGFIAFFACTYLFATEFIA. Positions 775–799 are disordered; sequence EGASEDEEAGTGSTGTRTQEEPVDK. In terms of domain architecture, ABC transporter 2 spans 813 to 1056; sequence FHWEDVIYDI…IIDYFEGQGA (244 aa). An ATP-binding site is contributed by 849-856; it reads GASGAGKT. 7 helical membrane passes run 1148-1168, 1184-1204, 1233-1253, 1269-1289, 1301-1321, 1337-1357, and 1423-1443; these read YIYSKIFLVAGSNLLIGFSFF, VFMGLTVFGNLVNQIMPHFVT, LPWNTLAGVVLFFCWYYPVGM, LMFLLIWQFMLFTSTFAHMLI, IASLLFSLTFLFCGVLAGPSG, PFTYLVEAMVSVGVANAPAFC, and FGFLWVFILFNIGMAVFFYWL.

It belongs to the ABC transporter superfamily. ABCG family. PDR (TC 3.A.1.205) subfamily.

Its subcellular location is the membrane. ABC-type transporter; part of the gene cluster that mediates the biosynthesis of erinacines, cyathane-xylosides that show unique biological activities, including leishmanicidal activity, stimulating activity for nerve growth-factor synthesis, and agonistic activity toward the kappa opioid receptor. This Hericium erinaceus (Lion's mane mushroom) protein is ABC-type transporter eriD.